Consider the following 423-residue polypeptide: G-protein coupled receptor 83 (423 aa).

The signal sequence occupies residues 1–17 (MKVPPVLLLFLLSSVRA). Residues 18–71 (TEQPQVVTEHPSMEAALTGPNASSHFWANYTFSDWQNFVGRRRYGAESQNPTVK) are Extracellular-facing. 2 N-linked (GlcNAc...) asparagine glycosylation sites follow: N38 and N46. The chain crosses the membrane as a helical span at residues 72–92 (ALLIVAYSFTIVFSLFGNVLV). Topologically, residues 93–107 (CHVIFKNQRMHSATS) are cytoplasmic. A helical membrane pass occupies residues 108-129 (LFIVNLAVADIMITLLNTPFTL). At 130–145 (VRFVNSTWVFGKGMCH) the chain is on the extracellular side. N-linked (GlcNAc...) asparagine glycosylation is present at N134. A disulfide bridge connects residues C144 and C224. A helical membrane pass occupies residues 146–167 (VSRFAQYCSLHVSALTLTAIAV). Residues 168-186 (DRHQVIMHPLKPRISITKG) lie on the Cytoplasmic side of the membrane. Residues 187–208 (VIYIAVIWVMATFFSLPHAICQ) traverse the membrane as a helical segment. Residues 209 to 238 (KLFTFKYSEDIVRSLCLPDFPEPADLFWKY) are Extracellular-facing. A helical transmembrane segment spans residues 239 to 260 (LDLATFILLYLLPLFIISVAYA). Residues 261-293 (RVAKKLWLCNTIGDVTTEQYLALRRKKKTTVKM) lie on the Cytoplasmic side of the membrane. The chain crosses the membrane as a helical span at residues 294 to 315 (LVLVVVLFALCWFPLNCYVLLL). The Extracellular portion of the chain corresponds to 316–327 (SSKAIHTNNALY). A helical transmembrane segment spans residues 328–348 (FAFHWFAMSSTCYNPFIYCWL). The Cytoplasmic segment spans residues 349-423 (NENFRVELKA…SSVEPVVAMS (75 aa)). A disordered region spans residues 389–423 (SHGRRAPLPNHHLPSSQIQSGKTDLSSVEPVVAMS). A compositionally biased stretch (polar residues) spans 401 to 414 (LPSSQIQSGKTDLS).

It belongs to the G-protein coupled receptor 1 family. As to expression, predominantly expressed in the brain, with moderate expression in the hypothalamus. Expressed in the thymus.

Its subcellular location is the cell membrane. G-protein coupled receptor for PEN, a neuropeptide produced from the precursor protein, proSAAS (encoded by PCSK1N). Acts through a G(i)- and G(q)-alpha-alpha-mediated pathway in response to PEN. Plays a role in food intake and body weight regulation. May contribute to the regulation of anxiety-related behaviors. In Mus musculus (Mouse), this protein is G-protein coupled receptor 83.